The primary structure comprises 128 residues: Small ribosomal subunit protein uS9 (128 aa).

Basic and acidic residues predominate over residues 97–113 (RSEGFMTRDPRSVERKK). Residues 97 to 128 (RSEGFMTRDPRSVERKKPGQPKARRRFQFSKR) form a disordered region. Positions 114–128 (PGQPKARRRFQFSKR) are enriched in basic residues.

This sequence belongs to the universal ribosomal protein uS9 family.

In Bacteroides fragilis (strain ATCC 25285 / DSM 2151 / CCUG 4856 / JCM 11019 / LMG 10263 / NCTC 9343 / Onslow / VPI 2553 / EN-2), this protein is Small ribosomal subunit protein uS9.